Reading from the N-terminus, the 467-residue chain is MVRVSRGCQSCVDAKLQSTPSPSPSKSPSPTESPEQCLQKRQSGEQVVLPSRPFPRTSPRAEYRPVPLLALDGYINPSLTVTAVNSQQAQVFTNYVLASFPCFFRCTETRVPVNWVEYVDQRGSSMNSCFDWAVRACTSAYLGSLHDDQRYLVASRSLYHRALRGLGNLLSSEKTAKSDEVLASAIVLAIFEKHNCSSPDAWLRHAAGIRTLMKLRGPKAHLEGFGRAMYIVYRNFLITAALVEGEACFLEEPEWQALNEEIAASDAKLPTSSLYTDVVERGFLSVIKIPGLVKRTRELQCLSSKKRAEVQPALLQDVQATRAGLRGIYTEFGVAVSMLRSGQDENDTFVGPVPNFFFEGYSSLFARGVRLGLLILNYLIVIMDPKQRATIDSENFMLLNDMTRSQRSTHPALEFKLPLTPPKSPGRPGLVVRSLITEETREPPTTDWMDRITSTMGLEAVHVSLVG.

The interval 1–60 (MVRVSRGCQSCVDAKLQSTPSPSPSKSPSPTESPEQCLQKRQSGEQVVLPSRPFPRTSPR) is disordered.

Functionally, involved in osmoadaptation. This is an uncharacterized protein from Emericella nidulans (strain FGSC A4 / ATCC 38163 / CBS 112.46 / NRRL 194 / M139) (Aspergillus nidulans).